The chain runs to 1083 residues: Alpha-mannosidase (1083 aa).

Residue serine 2 is modified to N-acetylserine. Zn(2+)-binding residues include histidine 298, aspartate 300, aspartate 411, and histidine 626. Aspartate 411 functions as the Nucleophile in the catalytic mechanism.

The protein belongs to the glycosyl hydrolase 38 family. Composed of isoforms with three constituent polypeptides described as [(107 kDa)-n (73 kDa)-(6-n) (31 kDa)-(6-n)], where n is 0-6. The 73 kDa and the 31 kDa polypeptides may be proteolytic derivatives of the 107 kDa polypeptide in the vacuole. Oligomerizes in the cytoplasm and retains its oligomeric form during import into the vacuole. The cofactor is Zn(2+). Post-translationally, the N-terminus is blocked.

Its subcellular location is the vacuole. The catalysed reaction is Hydrolysis of terminal, non-reducing alpha-D-mannose residues in alpha-D-mannosides.. Its function is as follows. Degrades free oligosaccharides in the vacuole. This is Alpha-mannosidase (AMS1) from Saccharomyces cerevisiae (strain ATCC 204508 / S288c) (Baker's yeast).